The primary structure comprises 310 residues: Repression factor of MSEs protein 1 (310 aa).

2 disordered regions span residues 83 to 155 (TQEV…EANA) and 192 to 230 (DGIRRRSSRISERDKRRSQSRLGSEEDEEGDGHDGDEGE). Residues 92–106 (RNTSSSSSSTRSNSS) are compositionally biased toward low complexity. A compositionally biased stretch (polar residues) spans 107–120 (ADISDTEYSGENTP). The span at 127–136 (SRRRRTRSRA) shows a compositional bias: basic residues. Positions 139–155 (RENSLPASLPSISEANA) are enriched in polar residues. Positions 192-208 (DGIRRRSSRISERDKRR) are enriched in basic and acidic residues. Serine 215 is subject to Phosphoserine.

Interacts directly with HST1 and SUM1. Required for the interaction between HST1 and SUM1.

It is found in the nucleus. Its function is as follows. Tethering factor required for histone deacetylase HST1-mediated repression. Probably involved in targeting HST1 to a subset of SUM1-regulated genes. The chain is Repression factor of MSEs protein 1 (RFM1) from Saccharomyces cerevisiae (strain ATCC 204508 / S288c) (Baker's yeast).